A 250-amino-acid chain; its full sequence is MFLQNKNVVVMGVANKKSIAWGCAKALKDQGANVIYTYQNERMKKQVVKLADENDLLVECDVASDASIQAAFETIKNEVGTIDGLVHAIAFAKKEELSGNVSDITRDGFLLAQDISSYSLLAVTHYAKPLLNPGSGIVTLTYLGSERAIPNYNMMGIAKASLETAVKYLAFELAADKIRVNGISAGAIKTLAVTGVKDYDQLISISNERTPDKTGVTIEEVGNTCAFLVSDLASGVVGDIIYVDKGVHLT.

NAD(+) contacts are provided by residues G12, 18–19 (SI), Q39, 61–62 (DV), and I89. A substrate-binding site is contributed by A92. Active-site proton acceptor residues include Y142 and Y152. NAD(+)-binding positions include K159 and 188 to 192 (IKTLA).

This sequence belongs to the short-chain dehydrogenases/reductases (SDR) family. FabI subfamily. As to quaternary structure, homotetramer.

It carries out the reaction a 2,3-saturated acyl-[ACP] + NAD(+) = a (2E)-enoyl-[ACP] + NADH + H(+). It functions in the pathway lipid metabolism; fatty acid biosynthesis. Inhibited by triclosan and its diphenyl ether analgues. Functionally, catalyzes the reduction of a carbon-carbon double bond in an enoyl moiety that is covalently linked to an acyl carrier protein (ACP). Involved in the elongation cycle of fatty acid which are used in the lipid metabolism. This chain is Enoyl-[acyl-carrier-protein] reductase [NADH] FabI (fabI), found in Enterococcus faecalis (strain ATCC 700802 / V583).